We begin with the raw amino-acid sequence, 708 residues long: RUN and FYVE domain-containing protein 1 (708 aa).

The segment covering 1–17 (MADREGGCAAGRGRELE) has biased composition (basic and acidic residues). Residues 1 to 57 (MADREGGCAAGRGRELEPELEPGPGPGSALEPGEEFEIVDRSQLPGPGDLRSATRPR) form a disordered region. One can recognise an RUN domain in the interval 139–271 (DADHAPLQQF…LDANLCLKGE (133 aa)). The stretch at 321–374 (TVGDLQTKIDGLEKTNSKLQEELSAATDRICSLQEEQQQLREQNELIRERSEKS) forms a coiled coil. Phosphotyrosine occurs at positions 389 and 400. Residues 405–617 (KQLKEEKKVR…QALQEMGLHL (213 aa)) adopt a coiled-coil conformation. Positions 493-522 (QVMSSMKQMEERLQHSERARQGAEERSHKL) are disordered. Over residues 500 to 522 (QMEERLQHSERARQGAEERSHKL) the composition is skewed to basic and acidic residues. The tract at residues 615–625 (LHLSQSKLKME) is interaction with RAB4. S620 is modified (phosphoserine). The FYVE-type zinc finger occupies 642-700 (DDEATHCRQCEKEFSISRRKHHCRNCGHIFCNTCSSNELALPSYPKPVRVCDSCHTLLL). Zn(2+) is bound by residues C648, C651, C664, C667, C672, C675, C692, and C695.

As to quaternary structure, self-assembles through coiled coil domains to drive ELVA (endo-lysosomal vesicular assembly) formation. Interacts with BMX. May interact with SSB. Interacts with RAB4 and RAB5 that have been activated by GTP-binding. Interacts WITH RAB14 and RAB4B (GTP-bound form); the interactions allow endosomal tethering and fusion. Interacts with ARL8B (GTP-bound form); the interaction is required for RUFY1 endosomal location and promotes interaction with RAB14. Post-translationally, phosphorylation on Tyr-389 and/or Tyr-400 is required for interaction with BMX and endosomal targeting. Broadly expressed, with highest levels in lung, testis, kidney and brain.

It is found in the early endosome membrane. Activating adapter involved in cargo sorting from early/recycling endosomes. Regulates retrieval of proteins from endosomes to the trans-Golgi network through interaction with the dynein-dynactin complex. Dual effector of RAB4B and RAB14, mediates a cooperative interaction allowing endosomal tethering and fusion. Binds phospholipid vesicles containing phosphatidylinositol 3-phosphate and participates in early endosomal trafficking. In oocytes, self-assembles to form a protein matrix which hold together endolysosomes, autophagosomes and proteasomes and generate non-membrane-bound compartments called endo-lysosomal vesicular assemblies (ELVAs). In immature oocytes, ELVAs sequester ubiquitinated protein aggregates and degrade them upon oocyte maturation. This is RUN and FYVE domain-containing protein 1 from Homo sapiens (Human).